The primary structure comprises 430 residues: Adenylosuccinate synthetase (430 aa).

Residues 11–17 (GDEGKGK) and 39–41 (GHS) contribute to the GTP site. The Proton acceptor role is filled by Asp-12. Positions 12 and 39 each coordinate Mg(2+). Residues 12 to 15 (DEGK), 37 to 40 (NAGH), Thr-129, Arg-143, Asn-221, Thr-236, and Arg-300 each bind IMP. The active-site Proton donor is the His-40. 296–302 (VSTGRKR) serves as a coordination point for substrate. GTP is bound by residues Arg-302, 328-330 (KLD), and 412-414 (GTG).

The protein belongs to the adenylosuccinate synthetase family. Homodimer. Mg(2+) serves as cofactor.

The protein resides in the cytoplasm. It carries out the reaction IMP + L-aspartate + GTP = N(6)-(1,2-dicarboxyethyl)-AMP + GDP + phosphate + 2 H(+). The protein operates within purine metabolism; AMP biosynthesis via de novo pathway; AMP from IMP: step 1/2. Functionally, plays an important role in the de novo pathway and in the salvage pathway of purine nucleotide biosynthesis. Catalyzes the first committed step in the biosynthesis of AMP from IMP. The polypeptide is Adenylosuccinate synthetase (Neurospora crassa (strain ATCC 24698 / 74-OR23-1A / CBS 708.71 / DSM 1257 / FGSC 987)).